We begin with the raw amino-acid sequence, 96 residues long: Co-chaperonin GroES (96 aa).

It belongs to the GroES chaperonin family. As to quaternary structure, heptamer of 7 subunits arranged in a ring. Interacts with the chaperonin GroEL.

It localises to the cytoplasm. Its function is as follows. Together with the chaperonin GroEL, plays an essential role in assisting protein folding. The GroEL-GroES system forms a nano-cage that allows encapsulation of the non-native substrate proteins and provides a physical environment optimized to promote and accelerate protein folding. GroES binds to the apical surface of the GroEL ring, thereby capping the opening of the GroEL channel. This chain is Co-chaperonin GroES, found in Wolbachia pipientis wMel.